The following is a 1081-amino-acid chain: DNA-directed RNA polymerase subunit beta (1081 aa).

Belongs to the RNA polymerase beta chain family. As to quaternary structure, in plastids the minimal PEP RNA polymerase catalytic core is composed of four subunits: alpha, beta, beta', and beta''. When a (nuclear-encoded) sigma factor is associated with the core the holoenzyme is formed, which can initiate transcription.

It localises to the plastid. Its subcellular location is the chloroplast. The enzyme catalyses RNA(n) + a ribonucleoside 5'-triphosphate = RNA(n+1) + diphosphate. Its function is as follows. DNA-dependent RNA polymerase catalyzes the transcription of DNA into RNA using the four ribonucleoside triphosphates as substrates. The polypeptide is DNA-directed RNA polymerase subunit beta (Cyanidium caldarium (Red alga)).